The following is a 353-amino-acid chain: Photosystem II protein D1 (353 aa).

T2 carries the N-acetylthreonine modification. Phosphothreonine is present on T2. The next 3 helical transmembrane spans lie at 29 to 46 (YIGW…TATS), 118 to 133 (HFLL…EWEL), and 142 to 156 (WIAV…AATA). Residue H118 coordinates chlorophyll a. Residue Y126 coordinates pheophytin a. Residues D170 and E189 each coordinate [CaMn4O5] cluster. Residues 197 to 218 (FHMLGVAGVFGGSLFSAMHGSL) traverse the membrane as a helical segment. H198 contacts chlorophyll a. Residues H215 and 264–265 (SF) each bind a quinone. Residue H215 coordinates Fe cation. H272 is a Fe cation binding site. Residues 274 to 288 (FLAAWPVVGIWFTAL) form a helical membrane-spanning segment. H332, E333, D342, and A344 together coordinate [CaMn4O5] cluster. Positions 345-353 (AIEAPSTNG) are excised as a propeptide.

The protein belongs to the reaction center PufL/M/PsbA/D family. In terms of assembly, PSII is composed of 1 copy each of membrane proteins PsbA, PsbB, PsbC, PsbD, PsbE, PsbF, PsbH, PsbI, PsbJ, PsbK, PsbL, PsbM, PsbT, PsbX, PsbY, PsbZ, Psb30/Ycf12, at least 3 peripheral proteins of the oxygen-evolving complex and a large number of cofactors. It forms dimeric complexes. The D1/D2 heterodimer binds P680, chlorophylls that are the primary electron donor of PSII, and subsequent electron acceptors. It shares a non-heme iron and each subunit binds pheophytin, quinone, additional chlorophylls, carotenoids and lipids. D1 provides most of the ligands for the Mn4-Ca-O5 cluster of the oxygen-evolving complex (OEC). There is also a Cl(-1) ion associated with D1 and D2, which is required for oxygen evolution. The PSII complex binds additional chlorophylls, carotenoids and specific lipids. is required as a cofactor. Tyr-161 forms a radical intermediate that is referred to as redox-active TyrZ, YZ or Y-Z. Post-translationally, C-terminally processed by CTPA; processing is essential to allow assembly of the oxygen-evolving complex and thus photosynthetic growth.

Its subcellular location is the plastid. The protein localises to the chloroplast thylakoid membrane. It carries out the reaction 2 a plastoquinone + 4 hnu + 2 H2O = 2 a plastoquinol + O2. Photosystem II (PSII) is a light-driven water:plastoquinone oxidoreductase that uses light energy to abstract electrons from H(2)O, generating O(2) and a proton gradient subsequently used for ATP formation. It consists of a core antenna complex that captures photons, and an electron transfer chain that converts photonic excitation into a charge separation. The D1/D2 (PsbA/PsbD) reaction center heterodimer binds P680, the primary electron donor of PSII as well as several subsequent electron acceptors. The chain is Photosystem II protein D1 from Petunia hybrida (Petunia).